We begin with the raw amino-acid sequence, 342 residues long: S-adenosylmethionine:tRNA ribosyltransferase-isomerase (342 aa).

This sequence belongs to the QueA family. As to quaternary structure, monomer.

The protein resides in the cytoplasm. It carries out the reaction 7-aminomethyl-7-carbaguanosine(34) in tRNA + S-adenosyl-L-methionine = epoxyqueuosine(34) in tRNA + adenine + L-methionine + 2 H(+). Its pathway is tRNA modification; tRNA-queuosine biosynthesis. In terms of biological role, transfers and isomerizes the ribose moiety from AdoMet to the 7-aminomethyl group of 7-deazaguanine (preQ1-tRNA) to give epoxyqueuosine (oQ-tRNA). In Listeria monocytogenes serovar 1/2a (strain ATCC BAA-679 / EGD-e), this protein is S-adenosylmethionine:tRNA ribosyltransferase-isomerase.